We begin with the raw amino-acid sequence, 67 residues long: Large ribosomal subunit protein bL31 (67 aa).

Positions 16, 18, 36, and 39 each coordinate Zn(2+).

It belongs to the bacterial ribosomal protein bL31 family. Type A subfamily. In terms of assembly, part of the 50S ribosomal subunit. It depends on Zn(2+) as a cofactor.

Its function is as follows. Binds the 23S rRNA. This Treponema pallidum (strain Nichols) protein is Large ribosomal subunit protein bL31.